We begin with the raw amino-acid sequence, 447 residues long: N-succinylarginine dihydrolase (447 aa).

Substrate-binding positions include 19-28 (AGLSFGNEAS), Asn-110, and 137-138 (HR). Residue Glu-174 is part of the active site. Arg-212 is a binding site for substrate. The active site involves His-248. Substrate is bound by residues Asp-250 and Asn-359. Cys-365 acts as the Nucleophile in catalysis.

This sequence belongs to the succinylarginine dihydrolase family. In terms of assembly, homodimer.

The catalysed reaction is N(2)-succinyl-L-arginine + 2 H2O + 2 H(+) = N(2)-succinyl-L-ornithine + 2 NH4(+) + CO2. The protein operates within amino-acid degradation; L-arginine degradation via AST pathway; L-glutamate and succinate from L-arginine: step 2/5. In terms of biological role, catalyzes the hydrolysis of N(2)-succinylarginine into N(2)-succinylornithine, ammonia and CO(2). The sequence is that of N-succinylarginine dihydrolase from Escherichia coli (strain ATCC 8739 / DSM 1576 / NBRC 3972 / NCIMB 8545 / WDCM 00012 / Crooks).